The sequence spans 794 residues: Kinesin-like protein KIN-13A (794 aa).

The region spanning 193–526 (KIKVVVRKRP…LRYADRVKSL (334 aa)) is the Kinesin motor domain. Residue 282 to 289 (GQTGSGKT) coordinates ATP. The interval 525–699 (SLSKSGNSKK…YETASRQYET (175 aa)) is disordered. The span at 569–579 (ETRRRVVEKDS) shows a compositional bias: basic and acidic residues. Polar residues-rich tracts occupy residues 580 to 593 (NSST…QPTN) and 611 to 632 (EPNS…YPQE). The span at 650–668 (GLREEKPDRPQNWSKRDVS) shows a compositional bias: basic and acidic residues. Over residues 669–696 (SSDIPTLTNFRQNASETASRQYETASRQ) the composition is skewed to polar residues. Residues 705 to 742 (ENLDALLEEEEALIAAHRKEIEDTMEIVREEMKLLAEV) adopt a coiled-coil conformation.

Belongs to the TRAFAC class myosin-kinesin ATPase superfamily. Kinesin family. KIN-13 subfamily. In terms of assembly, component of the active ARAC10-IRC5-KIN13A complex. Interacts (via-C-terminus) with ICR2 and ICR5 (via N-terminus). No interactions with ICR1. Expressed in leaves, roots, young and mature seedlings. Preferentially expressed in the secondary cell wall pits of differentiating metaxylem vessel cells (at the protein level).

The protein localises to the golgi apparatus. The protein resides in the golgi stack. Its subcellular location is the cytoplasm. It localises to the cytoskeleton. Its function is as follows. Internal motor kinesin involved in trichome morphogenesis. Participates in regulating the formation of Golgi-associated vesicles. Plays a central role in microtubule disassembly via the active ARAC10-ICR5 cascade, which establishes the secondary cell wall pattern in metaxylem vessel cells. Acts redundantly with KIN13B to modulate cell wall synthesis and cell expansion via the THE1 pathway. In Arabidopsis thaliana (Mouse-ear cress), this protein is Kinesin-like protein KIN-13A.